Consider the following 321-residue polypeptide: Phospho-N-acetylmuramoyl-pentapeptide-transferase (321 aa).

A run of 10 helical transmembrane segments spans residues Met1–Ile21, Met50–Val70, Ile76–Ile96, Phe112–Val132, Ile140–Trp160, Gly176–Leu196, Ala200–Ile220, Val225–Met245, Leu250–Val270, and Val300–Val320.

It belongs to the glycosyltransferase 4 family. MraY subfamily. Mg(2+) is required as a cofactor.

It localises to the cell membrane. The enzyme catalyses UDP-N-acetyl-alpha-D-muramoyl-L-alanyl-gamma-D-glutamyl-L-lysyl-D-alanyl-D-alanine + di-trans,octa-cis-undecaprenyl phosphate = Mur2Ac(oyl-L-Ala-gamma-D-Glu-L-Lys-D-Ala-D-Ala)-di-trans,octa-cis-undecaprenyl diphosphate + UMP. It participates in cell wall biogenesis; peptidoglycan biosynthesis. Catalyzes the initial step of the lipid cycle reactions in the biosynthesis of the cell wall peptidoglycan: transfers peptidoglycan precursor phospho-MurNAc-pentapeptide from UDP-MurNAc-pentapeptide onto the lipid carrier undecaprenyl phosphate, yielding undecaprenyl-pyrophosphoryl-MurNAc-pentapeptide, known as lipid I. The polypeptide is Phospho-N-acetylmuramoyl-pentapeptide-transferase (Staphylococcus aureus (strain MSSA476)).